A 181-amino-acid chain; its full sequence is Transcriptional repressor NrdR (181 aa).

The segment at Cys3 to Cys34 is a zinc-finger region. One can recognise an ATP-cone domain in the interval Pro49–Asp139.

It belongs to the NrdR family. Zn(2+) serves as cofactor.

Its function is as follows. Negatively regulates transcription of bacterial ribonucleotide reductase nrd genes and operons by binding to NrdR-boxes. The sequence is that of Transcriptional repressor NrdR from Xylella fastidiosa (strain 9a5c).